The sequence spans 467 residues: Glutamine synthetase (467 aa).

The GS beta-grasp domain occupies 11-95; sequence HDVKWIDLRF…IVCDIIEPST (85 aa). The GS catalytic domain occupies 103–467; it reads PRAIARRAEE…PLEYDLYYSV (365 aa). Mg(2+) is bound by residues Glu128 and Glu130. ATP is bound at residue Glu206. Mg(2+) contacts are provided by Glu211 and Glu219. L-glutamate is bound by residues 263–264 and Gly264; that span reads NG. Mg(2+) is bound at residue His268. ATP is bound by residues 270–272 and Ser272; that span reads HMS. Positions 320, 326, and 338 each coordinate L-glutamate. Residues Arg338, Arg343, and Lys351 each coordinate ATP. Mg(2+) is bound at residue Glu356. Position 358 (Arg358) interacts with L-glutamate. Residue Tyr396 is modified to O-AMP-tyrosine.

It belongs to the glutamine synthetase family. Oligomer of 12 subunits arranged in the form of two hexameric ring. It depends on Mg(2+) as a cofactor.

The protein localises to the cytoplasm. The enzyme catalyses L-glutamate + NH4(+) + ATP = L-glutamine + ADP + phosphate + H(+). The activity of this enzyme could be controlled by adenylation under conditions of abundant glutamine. Functionally, catalyzes the ATP-dependent biosynthesis of glutamine from glutamate and ammonia. The polypeptide is Glutamine synthetase (Azotobacter vinelandii).